A 495-amino-acid chain; its full sequence is Putative aldehyde dehydrogenase AldA (495 aa).

212 to 218 (GKGSESG) is an NAD(+) binding site. Catalysis depends on residues glutamate 256 and cysteine 290.

This sequence belongs to the aldehyde dehydrogenase family.

It catalyses the reaction an aldehyde + NAD(+) + H2O = a carboxylate + NADH + 2 H(+). In Staphylococcus aureus (strain bovine RF122 / ET3-1), this protein is Putative aldehyde dehydrogenase AldA (aldA).